The primary structure comprises 233 residues: Synaptogyrin-1 (233 aa).

The residue at position 1 (M1) is an N-acetylmethionine. The Cytoplasmic portion of the chain corresponds to 1 to 23 (MEGGAYGAGKAGGAFDPYTLVRQ). Residues 20–173 (LVRQPHTILR…QAVLAFQRYQ (154 aa)) form the MARVEL domain. A helical membrane pass occupies residues 24–44 (PHTILRVVSWLFSIVVFGSIV). At 45 to 71 (NEGYLNSASEGEEFCIYNRNPNACSYG) the chain is on the lumenal side. The helical transmembrane segment at 72–92 (VAVGVLAFLTCLLYLALDVYF) threads the bilayer. Residues 93–103 (PQISSVKDRKK) are Cytoplasmic-facing. A helical transmembrane segment spans residues 104-124 (AVLSDIGVSAFWAFLWFVGFC). The Lumenal segment spans residues 125–148 (YLANQWQVSKPKDNPLNEGTDAAR). Residues 149 to 169 (AAIAFSFFSIFTWAGQAVLAF) traverse the membrane as a helical segment. Residues 170 to 233 (QRYQIGADSA…EPQGYQSQGY (64 aa)) lie on the Cytoplasmic side of the membrane. The segment at 194-233 (MPYAPYVEPTGPDPAGMGGTYQQPANTFDTEPQGYQSQGY) is disordered. Over residues 213-233 (TYQQPANTFDTEPQGYQSQGY) the composition is skewed to polar residues.

Belongs to the synaptogyrin family.

It localises to the cytoplasmic vesicle. The protein resides in the secretory vesicle. Its subcellular location is the synaptic vesicle membrane. The protein localises to the melanosome. Its function is as follows. May play a role in regulated exocytosis. Modulates the localization of synaptophysin/SYP into synaptic-like microvesicles and may therefore play a role in synaptic-like microvesicle formation and/or maturation. Involved in the regulation of short-term and long-term synaptic plasticity. The polypeptide is Synaptogyrin-1 (Homo sapiens (Human)).